The chain runs to 293 residues: 33 kDa chaperonin (293 aa).

2 cysteine pairs are disulfide-bonded: Cys-229–Cys-231 and Cys-262–Cys-265.

Belongs to the HSP33 family. In terms of processing, under oxidizing conditions two disulfide bonds are formed involving the reactive cysteines. Under reducing conditions zinc is bound to the reactive cysteines and the protein is inactive.

It localises to the cytoplasm. Redox regulated molecular chaperone. Protects both thermally unfolding and oxidatively damaged proteins from irreversible aggregation. Plays an important role in the bacterial defense system toward oxidative stress. The protein is 33 kDa chaperonin of Methylobacillus flagellatus (strain ATCC 51484 / DSM 6875 / VKM B-1610 / KT).